Here is a 115-residue protein sequence, read N- to C-terminus: uncharacterized protein (115 aa).

3 helical membrane-spanning segments follow: residues 23–43 (LVYA…LFFA), 63–83 (AMVT…VVMV), and 90–110 (NVVI…YVAA).

The protein localises to the cell membrane. This is an uncharacterized protein from Mycobacterium bovis (strain ATCC BAA-935 / AF2122/97).